Here is a 156-residue protein sequence, read N- to C-terminus: Ribosomal RNA large subunit methyltransferase H (156 aa).

Residues Leu-73, Gly-104, and 123-128 (LSPLTL) contribute to the S-adenosyl-L-methionine site.

Belongs to the RNA methyltransferase RlmH family. Homodimer.

Its subcellular location is the cytoplasm. The enzyme catalyses pseudouridine(1915) in 23S rRNA + S-adenosyl-L-methionine = N(3)-methylpseudouridine(1915) in 23S rRNA + S-adenosyl-L-homocysteine + H(+). In terms of biological role, specifically methylates the pseudouridine at position 1915 (m3Psi1915) in 23S rRNA. The sequence is that of Ribosomal RNA large subunit methyltransferase H from Pectobacterium atrosepticum (strain SCRI 1043 / ATCC BAA-672) (Erwinia carotovora subsp. atroseptica).